An 84-amino-acid polypeptide reads, in one-letter code: Large ribosomal subunit protein eL34 (84 aa).

It belongs to the eukaryotic ribosomal protein eL34 family.

This chain is Large ribosomal subunit protein eL34, found in Pyrobaculum islandicum (strain DSM 4184 / JCM 9189 / GEO3).